Reading from the N-terminus, the 275-residue chain is Polyamine aminopropyltransferase (275 aa).

The region spanning 2 to 235 (ELWFTEKQTK…GLWTFTIGSK (234 aa)) is the PABS domain. Glutamine 31 lines the S-methyl-5'-thioadenosine pocket. Positions 62 and 86 each coordinate spermidine. Residues glutamate 106 and 137 to 138 (DG) contribute to the S-methyl-5'-thioadenosine site. The Proton acceptor role is filled by aspartate 155. 155 to 158 (DSTE) provides a ligand contact to spermidine. Proline 162 contributes to the S-methyl-5'-thioadenosine binding site.

This sequence belongs to the spermidine/spermine synthase family. In terms of assembly, homodimer or homotetramer.

The protein localises to the cytoplasm. The enzyme catalyses S-adenosyl 3-(methylsulfanyl)propylamine + putrescine = S-methyl-5'-thioadenosine + spermidine + H(+). Its pathway is amine and polyamine biosynthesis; spermidine biosynthesis; spermidine from putrescine: step 1/1. Functionally, catalyzes the irreversible transfer of a propylamine group from the amino donor S-adenosylmethioninamine (decarboxy-AdoMet) to putrescine (1,4-diaminobutane) to yield spermidine. The chain is Polyamine aminopropyltransferase from Bacillus mycoides (strain KBAB4) (Bacillus weihenstephanensis).